A 437-amino-acid chain; its full sequence is uncharacterized protein (437 aa).

Transmembrane regions (helical) follow at residues 102-122 (GIYM…PVII) and 272-292 (ILSI…ATVW).

Belongs to the herpesviridae UL49 family.

The protein localises to the host membrane. This is an uncharacterized protein from Connochaetes taurinus (Blue wildebeest).